A 172-amino-acid polypeptide reads, in one-letter code: Adrenodoxin homolog, mitochondrial (172 aa).

The N-terminal 16 residues, 1 to 16, are a transit peptide targeting the mitochondrion; the sequence is MLKIVTRAGHTARISN. The 103-residue stretch at 61-163 folds into the 2Fe-2S ferredoxin-type domain; that stretch reads LKITFILKDG…GIRVALPQMT (103 aa). Residues Cys-98, Cys-104, Cys-107, and Cys-144 each coordinate [2Fe-2S] cluster.

This sequence belongs to the adrenodoxin/putidaredoxin family. As to quaternary structure, interacts in its reduced state with the apo form of ISU1. The cofactor is [2Fe-2S] cluster.

Its subcellular location is the mitochondrion matrix. In terms of biological role, iron-sulfur protein that transfers electrons in a wide variety of metabolic reactions. Involved in heme A biosynthesis and in iron-sulfur cluster assembly. Transfers electrons from adrenodoxin reductase ARH1 to heme A synthase COX15, a heme protein that catalyzes the conversion of heme O to heme A. Required for the de novo synthesis of Fe-S clusters on iron sulfur cluster assembly protein ISU1. Interact in its reduced state with ISU1 to productively deliver electrons for Fe-S cluster synthesis. Essential for coenzyme Q biosynthesis. May transfer the electrons required for the hydroxylation reaction performed by COQ6. In Saccharomyces cerevisiae (strain ATCC 204508 / S288c) (Baker's yeast), this protein is Adrenodoxin homolog, mitochondrial.